Consider the following 226-residue polypeptide: Ribonuclease 3 (226 aa).

The 123-residue stretch at 6 to 128 (INRLQRKLGY…LIGGVFLDSN (123 aa)) folds into the RNase III domain. Residue Glu41 coordinates Mg(2+). The active site involves Asp45. The Mg(2+) site is built by Asp114 and Glu117. Residue Glu117 is part of the active site. Residues 155 to 225 (DPKTRLQEYL…AEQALKKLEL (71 aa)) form the DRBM domain.

It belongs to the ribonuclease III family. In terms of assembly, homodimer. Mg(2+) serves as cofactor.

The protein localises to the cytoplasm. It carries out the reaction Endonucleolytic cleavage to 5'-phosphomonoester.. Digests double-stranded RNA. Involved in the processing of primary rRNA transcript to yield the immediate precursors to the large and small rRNAs (23S and 16S). Processes some mRNAs, and tRNAs when they are encoded in the rRNA operon. Processes pre-crRNA and tracrRNA of type II CRISPR loci if present in the organism. In Salmonella enteritidis PT4 (strain P125109), this protein is Ribonuclease 3.